The sequence spans 433 residues: Serine--tRNA ligase (433 aa).

Position 235 to 237 (235 to 237 (TSE)) interacts with L-serine. 266-268 (RSE) lines the ATP pocket. E289 contributes to the L-serine binding site. An ATP-binding site is contributed by 353–356 (EISS). Position 388 (S388) interacts with L-serine.

It belongs to the class-II aminoacyl-tRNA synthetase family. Type-1 seryl-tRNA synthetase subfamily. As to quaternary structure, homodimer. The tRNA molecule binds across the dimer.

It is found in the cytoplasm. It catalyses the reaction tRNA(Ser) + L-serine + ATP = L-seryl-tRNA(Ser) + AMP + diphosphate + H(+). The enzyme catalyses tRNA(Sec) + L-serine + ATP = L-seryl-tRNA(Sec) + AMP + diphosphate + H(+). It participates in aminoacyl-tRNA biosynthesis; selenocysteinyl-tRNA(Sec) biosynthesis; L-seryl-tRNA(Sec) from L-serine and tRNA(Sec): step 1/1. Its function is as follows. Catalyzes the attachment of serine to tRNA(Ser). Is also able to aminoacylate tRNA(Sec) with serine, to form the misacylated tRNA L-seryl-tRNA(Sec), which will be further converted into selenocysteinyl-tRNA(Sec). The chain is Serine--tRNA ligase from Burkholderia vietnamiensis (strain G4 / LMG 22486) (Burkholderia cepacia (strain R1808)).